A 417-amino-acid polypeptide reads, in one-letter code: uncharacterized protein (417 aa).

This sequence belongs to the MG032/MG096/MG288 family.

This is an uncharacterized protein from Mycoplasma pneumoniae (strain ATCC 29342 / M129 / Subtype 1) (Mycoplasmoides pneumoniae).